We begin with the raw amino-acid sequence, 84 residues long: MSQTENAVTSSSGAKRAYRKGNPLSDAEKQRLSVARKRASFKEVKVFLEPKYKAMLMQMCHEDGLTQAEVLTALIKSEAQKRCM.

Positions 1-13 (MSQTENAVTSSSG) are enriched in polar residues. A disordered region spans residues 1–31 (MSQTENAVTSSSGAKRAYRKGNPLSDAEKQR).

Its function is as follows. This protein is involved in the determination of copy number in gene replication. It binds to the repA promoter thus inhibiting the synthesis of the mRNA for the initiator protein RepA. The polypeptide is Replication regulatory protein repA2 (repA2) (Escherichia coli).